The primary structure comprises 463 residues: POU domain, class 2, transcription factor 2 (463 aa).

Disordered regions lie at residues 1–87 (MVHS…QPHL), 159–182 (QPRAGLPTQPPKCLEPPSHPEEPS), 259–282 (SSLPSPNQLSSPSLGFDGLPGRRR), 341–376 (PCSAAPMLPSPGKPTSYSPHLVTPQGGAGTLPLSQA), and 393–463 (TLHP…PYQP). Basic and acidic residues predominate over residues 12 to 37 (RMSKPLEAEKQSLDSPSEHTDTERNG). Residues 41–60 (NHQNPQNKASPFSVSPTGPS) show a composition bias toward polar residues. Residues 75 to 85 (AAPPPPQPAQP) are compositionally biased toward pro residues. The POU-specific domain occupies 179–253 (EEPSDLEELE…LLEKWLNDAE (75 aa)). Low complexity predominate over residues 259–272 (SSLPSPNQLSSPSL). The homeobox DNA-binding region spans 281-340 (RRKKRTSIETNVRFALEKSFLANQKPTSEEILLIAEQLHMEKEVIRVWFCNRRQKEKRIN). A leucine-zipper region spans residues 373-394 (LSQASSSLSTTVTTLSSAVGTL). Residues 400–409 (AGGGGGGGGA) are compositionally biased toward gly residues.

The protein belongs to the POU transcription factor family. Class-2 subfamily. Interacts with NR3C1, AR and PGR. Interacts with POU2AF1; the interaction increases POU2F2 transactivation activity. As to expression, highest in B cells, but also present in brain (neuronal and glial cells), intestine, kidney, and testes. Expressed at higher levels in B-cells than in neuronal cells. In terms of tissue distribution, expressed in neuronal cell lines and brain, but not dorsal root ganglia. As to expression, expressed at lower levels in neuronal cells than in B cells. Expressed in neuronal cell lines, and at lower levels in neuroblastoma and dorsal root ganglia. In terms of tissue distribution, widely expressed in the developing nervous system but expression is confined to very specific regions in the adult brain, it is expressed at a lower level in B cells. As to expression, either absent in, or expressed at very low levels in neuronal cells and brain. Expressed in all tissues tested: mammary gland, liver, spleen, lung, kidney intestine, uterus and ovary of a virgin mouse. Levels of isoform OCT2.7 are highest in spleen and lung. In mammary gland, expression is localized to the alveolus epithelial cells.

It localises to the cytoplasm. Its subcellular location is the nucleus. Transactivation activity is enhanced by transcriptional coactivator POU2AF1. Functionally, transcription factor that specifically binds to the octamer motif (5'-ATTTGCAT-3'). Regulates IL6 expression in B cells with POU2AF1. Regulates transcription in a number of tissues in addition to activating immunoglobulin gene expression. Modulates transcription transactivation by NR3C1, AR and PGR. Activates octamer-containing promoters. Its function is as follows. Represses some promoters and activate others. In terms of biological role, represses some promoters and activate others. Activates the U2 small nuclear RNA (snRNA) promoter. Functionally, unable to bind to the octamer motif, but can still activate the beta-casein gene promoter at low levels. This is POU domain, class 2, transcription factor 2 from Mus musculus (Mouse).